A 438-amino-acid polypeptide reads, in one-letter code: Polycomb protein eed-A (438 aa).

A disordered region spans residues 1–67 (MSEASGRAAG…NAPGRKAWGK (67 aa)). Positions 40–57 (SIESGTNTERPDTPTNAA) are enriched in polar residues. 7 WD repeats span residues 88–131 (DHNQ…DIRL), 139–182 (DADE…CIKH), 185–225 (GHGN…LVAI), 231–270 (GHRD…MKTA), 301–338 (IHRN…DDID), 356–396 (SQCD…PHKA), and 405–438 (KCAS…DRLR).

It belongs to the WD repeat ESC family. Component of the prc2/eed-ezh2 complex. Interacts with yy1. Can interact with ezh2, hdac1 and taf9.

The protein localises to the nucleus. Polycomb group (PcG) protein. Component of the prc2/eed-ezh2 complex, which methylates 'Lys-9' and 'Lys-27' of histone H3, leading to transcriptional repression of the affected target gene. The chain is Polycomb protein eed-A (eed-a) from Xenopus laevis (African clawed frog).